The following is a 118-amino-acid chain: Galanin peptides (118 aa).

The first 19 residues, Met-1 to Thr-19, serve as a signal peptide directing secretion. Positions Glu-20–Glu-30 are excised as a propeptide. Ala-61 is modified (alanine amide).

The protein belongs to the galanin family. As to expression, strongly expressed in brain and stomach, moderately in the eye, and very weakly in heart, kidney and gills. Not detected in liver.

Its subcellular location is the secreted. Functionally, endocrine hormone of the central and peripheral nervous systems that binds and activates the G protein-coupled receptors GALR1 (galr1a and galr1b) and GALR2 (galr2a and galr2b). This small neuropeptide may regulate diverse physiologic functions including contraction of smooth muscle of the gastrointestinal and genitourinary tract, growth hormone and insulin release and adrenal secretion. This chain is Galanin peptides, found in Danio rerio (Zebrafish).